Here is a 334-residue protein sequence, read N- to C-terminus: Tryptophan--tRNA ligase (334 aa).

ATP contacts are provided by residues 11 to 13 and 19 to 20; these read QPT and GN. The 'HIGH' region motif lies at 12-20; it reads PTGKLTIGN. Asp135 provides a ligand contact to L-tryptophan. Residues 147–149, Ile186, and 195–199 contribute to the ATP site; these read GED and KMSKS. The 'KMSKS' region motif lies at 195-199; it reads KMSKS.

The protein belongs to the class-I aminoacyl-tRNA synthetase family. Homodimer.

It is found in the cytoplasm. The enzyme catalyses tRNA(Trp) + L-tryptophan + ATP = L-tryptophyl-tRNA(Trp) + AMP + diphosphate + H(+). Its function is as follows. Catalyzes the attachment of tryptophan to tRNA(Trp). The sequence is that of Tryptophan--tRNA ligase from Blochmanniella floridana.